Reading from the N-terminus, the 70-residue chain is Cytoinsectotoxin-2c (70 aa).

It belongs to the cationic peptide 06 (cytoinsectotoxin) family. Expressed by the venom gland.

The protein localises to the secreted. Functionally, insecticidal and antimicrobial peptide. Has insecticidal activity against larvae of flesh fly S.carnaria. Has antibacterial activity against Gram-positive bacterium B.subtilis B-501 (MIC=1.25 uM) and Gram-negative bacterium E.coli DH5alpha (MIC=2.5 uM). The chain is Cytoinsectotoxin-2c from Lachesana tarabaevi (Spider).